Reading from the N-terminus, the 259-residue chain is Nuclear egress protein 1 (259 aa).

The CCCH-type zinc-finger motif lies at Cys-80–His-184.

This sequence belongs to the herpesviridae NEC1 protein family. As to quaternary structure, forms a heterohexameric complex with NEC2. Interacts with capsid vertex specific component 2/CVC2; this interaction directs the capsid to the host inner nuclear membrane to initiate budding. Post-translationally, phosphorylated at serine residues in the N-terminus. This phosphorylation regulates the localization within the inner nuclear membrane.

It is found in the host nucleus inner membrane. Functionally, plays an essential role in virion nuclear egress, the first step of virion release from infected cell. Within the host nucleus, NEC1 interacts with the newly formed capsid through the vertexes and directs it to the inner nuclear membrane by associating with NEC2. Induces the budding of the capsid at the inner nuclear membrane as well as its envelopment into the perinuclear space. There, the NEC1/NEC2 complex promotes the fusion of the enveloped capsid with the outer nuclear membrane and the subsequent release of the viral capsid into the cytoplasm where it will reach the secondary budding sites in the host Golgi or trans-Golgi network. In Homo sapiens (Human), this protein is Nuclear egress protein 1.